The primary structure comprises 161 residues: Nucleotide-binding protein swp_1151 (161 aa).

This sequence belongs to the YajQ family.

In terms of biological role, nucleotide-binding protein. The chain is Nucleotide-binding protein swp_1151 from Shewanella piezotolerans (strain WP3 / JCM 13877).